The chain runs to 166 residues: Transcription antitermination protein NusB (166 aa).

The segment covering 1 to 18 (MISDESDRFNPRDPKPAD) has biased composition (basic and acidic residues). The tract at residues 1 to 28 (MISDESDRFNPRDPKPADAGKPSKSAKR) is disordered.

Belongs to the NusB family.

Its function is as follows. Involved in transcription antitermination. Required for transcription of ribosomal RNA (rRNA) genes. Binds specifically to the boxA antiterminator sequence of the ribosomal RNA (rrn) operons. The polypeptide is Transcription antitermination protein NusB (Pseudomonas putida (strain GB-1)).